A 214-amino-acid polypeptide reads, in one-letter code: Probable transaldolase (214 aa).

K83 serves as the catalytic Schiff-base intermediate with substrate.

This sequence belongs to the transaldolase family. Type 3B subfamily.

It localises to the cytoplasm. It catalyses the reaction D-sedoheptulose 7-phosphate + D-glyceraldehyde 3-phosphate = D-erythrose 4-phosphate + beta-D-fructose 6-phosphate. The protein operates within carbohydrate degradation; pentose phosphate pathway; D-glyceraldehyde 3-phosphate and beta-D-fructose 6-phosphate from D-ribose 5-phosphate and D-xylulose 5-phosphate (non-oxidative stage): step 2/3. Functionally, transaldolase is important for the balance of metabolites in the pentose-phosphate pathway. The chain is Probable transaldolase from Geobacter metallireducens (strain ATCC 53774 / DSM 7210 / GS-15).